Consider the following 433-residue polypeptide: tRNA modification GTPase MnmE (433 aa).

(6S)-5-formyl-5,6,7,8-tetrahydrofolate contacts are provided by Arg24, Glu86, and Lys125. One can recognise a TrmE-type G domain in the interval 218 to 363; the sequence is GARLALIGAP…LKEALREALL (146 aa). Asn228 lines the K(+) pocket. Residues 228–233, 247–253, and 272–275 contribute to the GTP site; these read NAGKSS, SPIPGTT, and DTAG. Position 232 (Ser232) interacts with Mg(2+). K(+) contacts are provided by Ser247, Ile249, and Thr252. Thr253 is a binding site for Mg(2+). Lys433 lines the (6S)-5-formyl-5,6,7,8-tetrahydrofolate pocket.

It belongs to the TRAFAC class TrmE-Era-EngA-EngB-Septin-like GTPase superfamily. TrmE GTPase family. As to quaternary structure, homodimer. Heterotetramer of two MnmE and two MnmG subunits. Requires K(+) as cofactor.

It is found in the cytoplasm. In terms of biological role, exhibits a very high intrinsic GTPase hydrolysis rate. Involved in the addition of a carboxymethylaminomethyl (cmnm) group at the wobble position (U34) of certain tRNAs, forming tRNA-cmnm(5)s(2)U34. This chain is tRNA modification GTPase MnmE, found in Thermus thermophilus (strain ATCC BAA-163 / DSM 7039 / HB27).